Reading from the N-terminus, the 246-residue chain is MAITMRQMLEAGVHFGHQTRFWNPKMAPFIFGHRNKIHIINLEKTLPMYNDALKYVRQLAANRGTILFVGTKRQSRDTIAQEALRAGMPYVNARWLGGMLTNFKTLKVSIKRLKDMEAAVEAGELEKMSKKEALLFEREIAKLQKSIGGVKDMGGIPDAIFVVDVGYHKIAVTEANKLGVPVIAVVDTNHSPEGVDYVIPGNDDSSKAVALYAQGVADAILEGRANAVNEVVQAVRGDDEYVEENA.

The protein belongs to the universal ribosomal protein uS2 family.

In Burkholderia pseudomallei (strain 668), this protein is Small ribosomal subunit protein uS2.